The following is a 444-amino-acid chain: 3-phosphoshikimate 1-carboxyvinyltransferase (444 aa).

Lysine 29, serine 30, and arginine 34 together coordinate 3-phosphoshikimate. Residue lysine 29 coordinates phosphoenolpyruvate. The phosphoenolpyruvate site is built by glycine 103 and arginine 132. 3-phosphoshikimate contacts are provided by serine 177, glutamine 179, aspartate 329, and lysine 356. Glutamine 179 lines the phosphoenolpyruvate pocket. The active-site Proton acceptor is aspartate 329. Residues arginine 360 and arginine 402 each coordinate phosphoenolpyruvate.

The protein belongs to the EPSP synthase family. As to quaternary structure, monomer.

Its subcellular location is the cytoplasm. The catalysed reaction is 3-phosphoshikimate + phosphoenolpyruvate = 5-O-(1-carboxyvinyl)-3-phosphoshikimate + phosphate. The protein operates within metabolic intermediate biosynthesis; chorismate biosynthesis; chorismate from D-erythrose 4-phosphate and phosphoenolpyruvate: step 6/7. Functionally, catalyzes the transfer of the enolpyruvyl moiety of phosphoenolpyruvate (PEP) to the 5-hydroxyl of shikimate-3-phosphate (S3P) to produce enolpyruvyl shikimate-3-phosphate and inorganic phosphate. The sequence is that of 3-phosphoshikimate 1-carboxyvinyltransferase from Prochlorococcus marinus (strain NATL2A).